An 884-amino-acid chain; its full sequence is Blastomere cadherin (884 aa).

The N-terminal stretch at 1-26 (MGGTDKFRYPSVWLCGLLCLLQVVPS) is a signal peptide. The propeptide occupies 27–157 (INVDVSGCQP…KHTGLKRKKR (131 aa)). 5 Cadherin domains span residues 158-265 (DWVI…RPKF), 266-378 (TQPV…APIF), 379-489 (DPKT…APVF), 490-595 (VPVV…DNGP), and 596-706 (VPSP…GFDL). Topologically, residues 158–706 (DWVIPPIKVS…QEKLVAGFDL (549 aa)) are extracellular. N-linked (GlcNAc...) asparagine glycans are attached at residues Asn427, Asn560, and Asn683. Residues 707–730 (PIILVILGSILALLILSLLLLLFL) traverse the membrane as a helical segment. Residues 731–884 (KRKKVVKEPL…YGGDDDDDEE (154 aa)) are Cytoplasmic-facing.

In terms of tissue distribution, expressed in pituitary gland, lung and kidney.

It localises to the cell membrane. Its function is as follows. Cadherins are calcium-dependent cell adhesion proteins. They preferentially interact with themselves in a homophilic manner in connecting cells; cadherins may thus contribute to the sorting of heterogeneous cell types. The polypeptide is Blastomere cadherin (Xenopus laevis (African clawed frog)).